The chain runs to 280 residues: Dehydrogenase/reductase SDR family member 2, mitochondrial (280 aa).

The transit peptide at Met1 to Met23 directs the protein to the mitochondrion. NAD(+) is bound by residues Ser46 and Ile48. N6-acetyllysine; alternate is present on Lys96. The residue at position 96 (Lys96) is an N6-succinyllysine; alternate. Substrate is bound at residue Ser172. NAD(+)-binding residues include Tyr185 and Lys189. Tyr185 functions as the Proton acceptor in the catalytic mechanism. Lys219 is subject to N6-acetyllysine; alternate. Lys219 carries the N6-succinyllysine; alternate modification. Residue Thr220 coordinates NAD(+). Ser223 is modified (phosphoserine). An N6-succinyllysine modification is found at Lys237.

The protein belongs to the short-chain dehydrogenases/reductases (SDR) family. As to quaternary structure, directly interacts with MDM2; this interaction occurs in the nucleus and does not target DHRS2 to degradation. As to expression, widely expressed, with highest levels in liver and kidney, followed by heart, spleen, skeletal muscle and placenta. In hemopoietic cells, expressed in dendritic cells, but not in monocytes, macrophages, granulocytes, nor in B and T lymphocytes.

Its subcellular location is the mitochondrion matrix. It localises to the nucleus. Functionally, NADPH-dependent oxidoreductase which catalyzes the reduction of dicarbonyl compounds. Displays reductase activity in vitro with 3,4-hexanedione, 2,3-heptanedione and 1-phenyl-1,2-propanedione as substrates. May function as a dicarbonyl reductase in the enzymatic inactivation of reactive carbonyls involved in covalent modification of cellular components. Also displays a minor hydroxysteroid dehydrogenase activity toward bile acids such as ursodeoxycholic acid (UDCA) and isoursodeoxycholic acid (isoUDCA), which makes it unlikely to control hormone levels. Doesn't show any activity in vitro with retinoids and sugars as substrates. Attenuates MDM2-mediated p53/TP53 degradation, leading to p53/TP53 stabilization and increased transcription activity, resulting in the accumulation of MDM2 and CDKN1A/p21. Reduces proliferation, migration and invasion of cancer cells and well as the production of ROS in cancer. This is Dehydrogenase/reductase SDR family member 2, mitochondrial from Homo sapiens (Human).